Here is a 568-residue protein sequence, read N- to C-terminus: MAGSPRVYNSQHCGFSVAVMRFLLLLLTAVLISLAWLSPDHSYPWLTFASEMLSFAAFLSLLALFLNRPLELPRVQLLALPVVFIPMIQWGFGLVVDFSSALLSSAYLLGFWLTMLLGYNLSRSSADRERMFTLSSYLLFAVALLTSLIACIQWLNLESHVPGVMNLYSHRPYANFAQPNNMSTFLILGLLGCLYLAEKQKLKQYYIWPVAALIVFAITLSQSRTAWVFGLFFIIYWTYKSWRYPTHLKRYAVLLWAIGFFAVGLLFPRFTRLIQKLKEGNVVQTSSVVERASAGHERLGIWQQMLDAIHQKPWTGYGWNQTSIAELSSMSSNTIHVWFTSAHNVVLDLLVWNGWLLGGLITICILIWICWLNVHAKTTESIIACLMVSAVWIHTLLEYPLQYAYFLLPVGFLMGLIQAQTPDQTARSVPVSVIRSIWVIGIMLLALIWRDYNLYKVNSLRILKNQPANIEIWGSSKILVLTEFDQRLYWLKLSPVAPLTSTELDQIEKMVQNKATPYNLQKYAQLLLANHQFEKAQQQIAYLNRLHKKDYTLQDLQQANASAVESSK.

Helical transmembrane passes span 17–37 (VAVM…LAWL), 46–66 (LTFA…ALFL), 78–98 (LALP…VVDF), 101–121 (ALLS…GYNL), 132–152 (FTLS…IACI), 176–196 (FAQP…CLYL), 214–234 (IVFA…LFFI), 251–271 (YAVL…PRFT), 349–369 (LLVW…LIWI), 376–396 (AKTT…IHTL), 397–417 (LEYP…MGLI), and 429–449 (VPVS…ALIW).

It belongs to the PglL O-oligosaccharyltransferase family.

The protein resides in the cell membrane. Functionally, catalyzes the O-glycosylation of multiple protein targets. Is responsible for general protein glycosylation within A.baylyi ADP1. Does not act as an O-antigen ligase. This Acinetobacter baylyi (strain ATCC 33305 / BD413 / ADP1) protein is General O-oligosaccharyltransferase.